The primary structure comprises 488 residues: Protein nucleotidyltransferase YdiU (488 aa).

Residues G91, G93, R94, K114, D126, G127, R177, and R184 each contribute to the ATP site. The active-site Proton acceptor is the D253. 2 residues coordinate Mg(2+): N254 and D263. Residue D263 participates in ATP binding.

This sequence belongs to the SELO family. The cofactor is Mg(2+). Requires Mn(2+) as cofactor.

It catalyses the reaction L-seryl-[protein] + ATP = 3-O-(5'-adenylyl)-L-seryl-[protein] + diphosphate. The enzyme catalyses L-threonyl-[protein] + ATP = 3-O-(5'-adenylyl)-L-threonyl-[protein] + diphosphate. The catalysed reaction is L-tyrosyl-[protein] + ATP = O-(5'-adenylyl)-L-tyrosyl-[protein] + diphosphate. It carries out the reaction L-histidyl-[protein] + UTP = N(tele)-(5'-uridylyl)-L-histidyl-[protein] + diphosphate. It catalyses the reaction L-seryl-[protein] + UTP = O-(5'-uridylyl)-L-seryl-[protein] + diphosphate. The enzyme catalyses L-tyrosyl-[protein] + UTP = O-(5'-uridylyl)-L-tyrosyl-[protein] + diphosphate. Nucleotidyltransferase involved in the post-translational modification of proteins. It can catalyze the addition of adenosine monophosphate (AMP) or uridine monophosphate (UMP) to a protein, resulting in modifications known as AMPylation and UMPylation. The sequence is that of Protein nucleotidyltransferase YdiU from Bacillus cereus (strain G9842).